Here is a 316-residue protein sequence, read N- to C-terminus: Pantothenate kinase (316 aa).

95–102 lines the ATP pocket; the sequence is GSVAVGKS.

The protein belongs to the prokaryotic pantothenate kinase family.

Its subcellular location is the cytoplasm. The enzyme catalyses (R)-pantothenate + ATP = (R)-4'-phosphopantothenate + ADP + H(+). It participates in cofactor biosynthesis; coenzyme A biosynthesis; CoA from (R)-pantothenate: step 1/5. This chain is Pantothenate kinase, found in Shewanella sediminis (strain HAW-EB3).